A 504-amino-acid polypeptide reads, in one-letter code: MEEFQVYLELNRSRRHDFLYPLIFREYIYALAHDHGLNKSMIFLENQGYGNKFSSLIVKRLIIRMDQQNHLIISANDSNQNPFFGHNNNLYSQMISAGFAVIVEIPFSLRLVSYSQGEEVAKSHNLQSIHSIFPFLEDKFSHLNYVLDVLIPHPIHLEILVQALRYWVKDASSLHLLRFSLYEYCNLKSFITPKKSISIFNPRLFLFLYNSHACEYESIFLFLRNQSSHLRSTSSGVFLERIYFYGKIEYLVEVFYNDFQNNLWLFKDPFIHFIRYQGKAILASKDTSLLMNKWKYYFVDLWQYYFYMWSQSGRVRINQLSKYSLDFLGYLSSVRLNPSAVRSQMLENSFIIDNAMKTLDTRIPIISLIGSLSKAKFCNTLGHPISKPTWADSSDSDIIDRFVRICRNLSHYHSGSSKKKSLYRIKYILRFSCVKTLARKHKSTVRAFLKRLGSEFLEEFFTETEEEHVFSLIFPRGFFTLRKLYRGRIWYLDIICINALVNHE.

The protein belongs to the intron maturase 2 family. MatK subfamily.

Its subcellular location is the plastid. The protein localises to the chloroplast. In terms of biological role, usually encoded in the trnK tRNA gene intron. Probably assists in splicing its own and other chloroplast group II introns. The polypeptide is Maturase K (Pentaplaris doroteae).